Reading from the N-terminus, the 425-residue chain is GTPase Obg (425 aa).

The Obg domain maps to Met1–Ile158. Residues Lys118–Glu144 are disordered. Residues Ala159–Ala327 enclose the OBG-type G domain. Residues Gly165–Ser172, Phe190–Thr194, Asp211–Gly214, Asn281–Glu284, and Ser308–Ala310 each bind ATP. Positions 172 and 192 each coordinate Mg(2+). Positions Arg348 to Glu425 constitute an OCT domain.

The protein belongs to the TRAFAC class OBG-HflX-like GTPase superfamily. OBG GTPase family. As to quaternary structure, monomer. Requires Mg(2+) as cofactor.

Its subcellular location is the cytoplasm. Functionally, an essential GTPase which binds GTP, GDP and possibly (p)ppGpp with moderate affinity, with high nucleotide exchange rates and a fairly low GTP hydrolysis rate. Plays a role in control of the cell cycle, stress response, ribosome biogenesis and in those bacteria that undergo differentiation, in morphogenesis control. In Brevibacillus brevis (strain 47 / JCM 6285 / NBRC 100599), this protein is GTPase Obg.